A 471-amino-acid polypeptide reads, in one-letter code: ATP synthase subunit beta (471 aa).

158 to 165 (GGAGCGKT) is a binding site for ATP.

Belongs to the ATPase alpha/beta chains family. In terms of assembly, F-type ATPases have 2 components, CF(1) - the catalytic core - and CF(0) - the membrane proton channel. CF(1) has five subunits: alpha(3), beta(3), gamma(1), delta(1), epsilon(1). CF(0) has three main subunits: a(1), b(2) and c(9-12). The alpha and beta chains form an alternating ring which encloses part of the gamma chain. CF(1) is attached to CF(0) by a central stalk formed by the gamma and epsilon chains, while a peripheral stalk is formed by the delta and b chains.

It localises to the cell inner membrane. It catalyses the reaction ATP + H2O + 4 H(+)(in) = ADP + phosphate + 5 H(+)(out). Functionally, produces ATP from ADP in the presence of a proton gradient across the membrane. The catalytic sites are hosted primarily by the beta subunits. The protein is ATP synthase subunit beta of Desulfotalea psychrophila (strain LSv54 / DSM 12343).